Reading from the N-terminus, the 382-residue chain is Putative phospholipase A1 (382 aa).

An N-terminal signal peptide occupies residues 1-27 (MPTMGAEMNTRNMRYILLTGLLPMASA). The Periplasmic portion of the chain corresponds to 28–65 (FGETALQCAALTDNVTRLACYDRIFAAQLPSSAGQEGQ). A beta stranded transmembrane segment spans residues 66 to 78 (ESKAVLNLTETVR). Topologically, residues 79–168 (SSLDKGEAVI…VQEKFGQQKR (90 aa)) are extracellular. A beta stranded transmembrane segment spans residues 169-183 (AETKLQVSFKSKIAE). At 184–189 (DLFKTR) the chain is on the periplasmic side. A beta stranded membrane pass occupies residues 190–202 (ADLWFGYTQRSDW). The Extracellular portion of the chain corresponds to 203 to 213 (QIYNQGRKSAP). Ser-211 contacts Ca(2+). Residues 214-233 (FRNTDYKPEIFLTQPVKADL) traverse the membrane as a beta stranded segment. Residues 234–236 (PFG) lie on the Periplasmic side of the membrane. A beta stranded membrane pass occupies residues 237-250 (GRLRMLGAGFVHQS). The Proton acceptor role is filled by His-248. Residue Ser-250 is the Nucleophile of the active site. Topologically, residues 251–259 (NGQSRPESR) are extracellular. Ser-258 contributes to the Ca(2+) binding site. A beta stranded transmembrane segment spans residues 260–272 (SWNRIYAMAGMEW). Residues 273–274 (GK) are Periplasmic-facing. The chain crosses the membrane as a beta stranded span at residues 275–284 (LTVIPRVWVR). The Extracellular portion of the chain corresponds to 285–306 (AFDQSGDKNDNPDIADYMGYGD). Asp-294 is a binding site for Ca(2+). The beta stranded transmembrane segment at 307-313 (VKLQYRL) threads the bilayer. Over 314–315 (ND) the chain is Periplasmic. Residues 316-325 (RQNVYSVLRY) form a beta stranded membrane-spanning segment. The Extracellular portion of the chain corresponds to 326–332 (NPKTGYG). A beta stranded membrane pass occupies residues 333 to 341 (AIEAAYTFP). Residues 342-346 (IKGKL) are Periplasmic-facing. A beta stranded transmembrane segment spans residues 347 to 356 (KGVVRGFHGY). At 357–365 (GESLIDYNH) the chain is on the extracellular side. Residues 366-377 (KQNGIGIGLMFN) form a beta stranded membrane-spanning segment. The Periplasmic segment spans residues 378–382 (DLDGI).

It belongs to the phospholipase A1 family. In terms of assembly, homodimer; dimerization is reversible, and the dimeric form is the active one. Ca(2+) serves as cofactor.

The protein localises to the cell outer membrane. It catalyses the reaction a 1,2-diacyl-sn-glycero-3-phosphocholine + H2O = a 2-acyl-sn-glycero-3-phosphocholine + a fatty acid + H(+). It carries out the reaction a 1,2-diacyl-sn-glycero-3-phosphocholine + H2O = a 1-acyl-sn-glycero-3-phosphocholine + a fatty acid + H(+). Functionally, hydrolysis of phosphatidylcholine with phospholipase A2 (EC 3.1.1.4) and phospholipase A1 (EC 3.1.1.32) activities. In Neisseria meningitidis serogroup B (strain ATCC BAA-335 / MC58), this protein is Putative phospholipase A1.